A 517-amino-acid chain; its full sequence is Putative thymidine phosphorylase (517 aa).

The protein belongs to the thymidine/pyrimidine-nucleoside phosphorylase family. Type 2 subfamily.

The catalysed reaction is thymidine + phosphate = 2-deoxy-alpha-D-ribose 1-phosphate + thymine. The sequence is that of Putative thymidine phosphorylase from Legionella pneumophila (strain Corby).